Consider the following 308-residue polypeptide: Pantothenate kinase (308 aa).

Residue 90–97 coordinates ATP; the sequence is GSVAVGKS.

Belongs to the prokaryotic pantothenate kinase family.

It localises to the cytoplasm. It carries out the reaction (R)-pantothenate + ATP = (R)-4'-phosphopantothenate + ADP + H(+). It functions in the pathway cofactor biosynthesis; coenzyme A biosynthesis; CoA from (R)-pantothenate: step 1/5. This chain is Pantothenate kinase, found in Sorangium cellulosum (strain So ce56) (Polyangium cellulosum (strain So ce56)).